A 139-amino-acid chain; its full sequence is Translation initiation factor 5A (139 aa).

At Lys36 the chain carries Hypusine.

It belongs to the eIF-5A family.

It localises to the cytoplasm. Its function is as follows. Functions by promoting the formation of the first peptide bond. The polypeptide is Translation initiation factor 5A (eif5a) (Aeropyrum pernix (strain ATCC 700893 / DSM 11879 / JCM 9820 / NBRC 100138 / K1)).